The chain runs to 548 residues: Glucose-6-phosphate isomerase (548 aa).

Glutamate 359 functions as the Proton donor in the catalytic mechanism. Catalysis depends on residues histidine 390 and lysine 510.

It belongs to the GPI family.

It localises to the cytoplasm. The catalysed reaction is alpha-D-glucose 6-phosphate = beta-D-fructose 6-phosphate. The protein operates within carbohydrate biosynthesis; gluconeogenesis. It participates in carbohydrate degradation; glycolysis; D-glyceraldehyde 3-phosphate and glycerone phosphate from D-glucose: step 2/4. Catalyzes the reversible isomerization of glucose-6-phosphate to fructose-6-phosphate. The sequence is that of Glucose-6-phosphate isomerase from Gloeobacter violaceus (strain ATCC 29082 / PCC 7421).